Reading from the N-terminus, the 115-residue chain is NAD(P)H-quinone oxidoreductase subunit M (115 aa).

This sequence belongs to the complex I NdhM subunit family. As to quaternary structure, NDH-1 can be composed of about 15 different subunits; different subcomplexes with different compositions have been identified which probably have different functions.

It localises to the cellular thylakoid membrane. It catalyses the reaction a plastoquinone + NADH + (n+1) H(+)(in) = a plastoquinol + NAD(+) + n H(+)(out). The catalysed reaction is a plastoquinone + NADPH + (n+1) H(+)(in) = a plastoquinol + NADP(+) + n H(+)(out). Its function is as follows. NDH-1 shuttles electrons from an unknown electron donor, via FMN and iron-sulfur (Fe-S) centers, to quinones in the respiratory and/or the photosynthetic chain. The immediate electron acceptor for the enzyme in this species is believed to be plastoquinone. Couples the redox reaction to proton translocation, and thus conserves the redox energy in a proton gradient. Cyanobacterial NDH-1 also plays a role in inorganic carbon-concentration. This Prochlorococcus marinus (strain MIT 9515) protein is NAD(P)H-quinone oxidoreductase subunit M.